The sequence spans 100 residues: Apolipoprotein C-II (100 aa).

The first 22 residues, 1–22, serve as a signal peptide directing secretion; sequence MGTRFLLALFLVLLVLGFEVQG. The tract at residues 66–74 is lipid binding; sequence TVDEKLRDM. The segment at 78–100 is lipoprotein lipase cofactor; the sequence is STAAVSTYAGIFTDQLLTLLKGD.

This sequence belongs to the apolipoprotein C2 family. Post-translationally, proapolipoprotein C-II is synthesized as a sialic acid containing glycoprotein which is subsequently desialylated prior to its proteolytic processing. Proapolipoprotein C-II, the major form found in plasma undergoes proteolytic cleavage of its N-terminal hexapeptide to generate apolipoprotein C-II, which occurs as the minor form in plasma.

It localises to the secreted. Functionally, component of chylomicrons, very low-density lipoproteins (VLDL), low-density lipoproteins (LDL), and high-density lipoproteins (HDL) in plasma. Plays an important role in lipoprotein metabolism as an activator of lipoprotein lipase. Both proapolipoprotein C-II and apolipoprotein C-II can activate lipoprotein lipase. The chain is Apolipoprotein C-II (APOC2) from Otolemur garnettii (Small-eared galago).